Reading from the N-terminus, the 933-residue chain is Valine--tRNA ligase (933 aa).

A 'HIGH' region motif is present at residues 58-68 (PNVTGSLHMGH). A 'KMSKS' region motif is present at residues 556-560 (KMSKS). Residue K559 coordinates ATP. 2 coiled-coil regions span residues 807-833 (VTKN…ANKV) and 864-933 (EGLV…LGLK).

The protein belongs to the class-I aminoacyl-tRNA synthetase family. ValS type 1 subfamily. As to quaternary structure, monomer.

It is found in the cytoplasm. It carries out the reaction tRNA(Val) + L-valine + ATP = L-valyl-tRNA(Val) + AMP + diphosphate. Its function is as follows. Catalyzes the attachment of valine to tRNA(Val). As ValRS can inadvertently accommodate and process structurally similar amino acids such as threonine, to avoid such errors, it has a 'posttransfer' editing activity that hydrolyzes mischarged Thr-tRNA(Val) in a tRNA-dependent manner. The chain is Valine--tRNA ligase from Prochlorococcus marinus (strain SARG / CCMP1375 / SS120).